Reading from the N-terminus, the 1205-residue chain is Nitric oxide synthase 3 (1205 aa).

The disordered stretch occupies residues 1–73 (MGNLKSVGQE…PPEGPKFPRV (73 aa)). Glycine 2 is lipidated: N-myristoyl glycine. S-palmitoyl cysteine attachment occurs at residues cysteine 15 and cysteine 26. The span at 15–27 (CGLGLGLGLGLCG) shows a compositional bias: gly residues. Residues 33–47 (TPAPEPSRAPAPATP) are compositionally biased toward pro residues. Residues cysteine 96 and cysteine 101 each contribute to the Zn(2+) site. An interaction with NOSIP region spans residues 100 to 488 (RCLGSLVLPR…PDPWKGSAAK (389 aa)). Serine 104 contacts (6R)-L-erythro-5,6,7,8-tetrahydrobiopterin. Serine 116 bears the Phosphoserine; by CDK5 mark. Cysteine 186 is a heme b binding site. The L-arginine site is built by glutamine 249, tryptophan 358, tyrosine 359, glutamate 363, and asparagine 368. (6R)-L-erythro-5,6,7,8-tetrahydrobiopterin is bound by residues alanine 448, tryptophan 449, and phenylalanine 462. A heme b-binding site is contributed by tyrosine 477. The calmodulin-binding stretch occupies residues 492–512 (IARKKTFKEVANAVKISASLM). Threonine 497 is subject to Phosphothreonine; by AMPK. The region spanning 522–705 (ASILYASETV…AFRGWAQAAF (184 aa)) is the Flavodoxin-like domain. Serine 528, glutamate 529, threonine 530, arginine 532, serine 574, and threonine 575 together coordinate FMN. A phosphoserine mark is found at serine 617, serine 635, and serine 640. Serine 656, cysteine 663, glutamate 689, and glutamine 693 together coordinate FMN. The 247-residue stretch at 758-1004 (RKMFQATVLS…IRAAPSFRLP (247 aa)) folds into the FAD-binding FR-type domain. NADP(+) is bound at residue arginine 778. Histidine 800 contributes to the FAD binding site. Residues 820 to 848 (EDPTPPTESVGVEQLEKGSPGGPPPSWVR) are disordered. Serine 838 carries the phosphoserine modification. Residues arginine 940, tyrosine 942, serine 943, threonine 958, alanine 960, tyrosine 964, valine 977, cysteine 978, and serine 979 each contribute to the FAD site. Residues threonine 1018, arginine 1051, serine 1080, arginine 1081, lysine 1087, tyrosine 1089, and glutamine 1091 each contribute to the NADP(+) site. A Phosphothreonine modification is found at threonine 1177. Serine 1179 is modified (phosphoserine; by AMPK). At serine 1181 the chain carries Phosphoserine.

The protein belongs to the NOS family. In terms of assembly, homodimer. Interacts with NOSIP and NOSTRIN. Interacts with HSP90AB1. Forms a complex with ASL, ASS1 and SLC7A1; the complex regulates cell-autonomous L-arginine synthesis and citrulline recycling while channeling extracellular L-arginine to nitric oxide synthesis pathway. The cofactor is heme b. FAD is required as a cofactor. Requires FMN as cofactor. It depends on (6R)-L-erythro-5,6,7,8-tetrahydrobiopterin as a cofactor. In terms of processing, phosphorylation by AMPK at Ser-1179 in the presence of Ca(2+)-calmodulin (CaM) activates activity. In absence of Ca(2+)-calmodulin, AMPK also phosphorylates Thr-497, resulting in inhibition of activity. Phosphorylation of Ser-116 by CDK5 reduces activity.

The protein resides in the membrane. It is found in the caveola. The protein localises to the cytoplasm. It localises to the cytoskeleton. Its subcellular location is the golgi apparatus. The protein resides in the cell membrane. The catalysed reaction is 2 L-arginine + 3 NADPH + 4 O2 + H(+) = 2 L-citrulline + 2 nitric oxide + 3 NADP(+) + 4 H2O. Stimulated by calcium/calmodulin. Inhibited by NOSIP and NOSTRIN. Functionally, produces nitric oxide (NO) which is implicated in vascular smooth muscle relaxation through a cGMP-mediated signal transduction pathway. NO mediates vascular endothelial growth factor (VEGF)-induced angiogenesis in coronary vessels and promotes blood clotting through the activation of platelets. In Sus scrofa (Pig), this protein is Nitric oxide synthase 3 (NOS3).